The sequence spans 310 residues: Glutaminase (310 aa).

Serine 66, asparagine 117, glutamate 161, asparagine 168, tyrosine 192, tyrosine 244, and valine 262 together coordinate substrate.

Belongs to the glutaminase family. In terms of assembly, homotetramer.

It catalyses the reaction L-glutamine + H2O = L-glutamate + NH4(+). In Desulfovibrio desulfuricans (strain ATCC 27774 / DSM 6949 / MB), this protein is Glutaminase.